The following is a 222-amino-acid chain: Putative adhesin RP828 (222 aa).

The N-terminal stretch at 1-22 is a signal peptide; that stretch reads MKKLLLIATASATILSSSVSFA.

Its function is as follows. Adheres to biotinylated epithelial (Vero cell) proteins. This is Putative adhesin RP828 from Rickettsia prowazekii (strain Madrid E).